The following is a 69-amino-acid chain: Large ribosomal subunit protein uL29 (69 aa).

The protein belongs to the universal ribosomal protein uL29 family.

The sequence is that of Large ribosomal subunit protein uL29 from Mycoplasmopsis agalactiae (strain NCTC 10123 / CIP 59.7 / PG2) (Mycoplasma agalactiae).